The primary structure comprises 347 residues: Heat-inducible transcription repressor HrcA (347 aa).

The protein belongs to the HrcA family.

In terms of biological role, negative regulator of class I heat shock genes (grpE-dnaK-dnaJ and groELS operons). Prevents heat-shock induction of these operons. The polypeptide is Heat-inducible transcription repressor HrcA (Mycoplasmopsis pulmonis (strain UAB CTIP) (Mycoplasma pulmonis)).